We begin with the raw amino-acid sequence, 323 residues long: tRNA U34 carboxymethyltransferase (323 aa).

Residues K91, W105, K110, G130, 152–154 (DPS), 181–182 (IE), M196, Y200, and R315 each bind carboxy-S-adenosyl-L-methionine.

It belongs to the class I-like SAM-binding methyltransferase superfamily. CmoB family. As to quaternary structure, homotetramer.

It carries out the reaction carboxy-S-adenosyl-L-methionine + 5-hydroxyuridine(34) in tRNA = 5-carboxymethoxyuridine(34) in tRNA + S-adenosyl-L-homocysteine + H(+). In terms of biological role, catalyzes carboxymethyl transfer from carboxy-S-adenosyl-L-methionine (Cx-SAM) to 5-hydroxyuridine (ho5U) to form 5-carboxymethoxyuridine (cmo5U) at position 34 in tRNAs. The protein is tRNA U34 carboxymethyltransferase of Vibrio campbellii (strain ATCC BAA-1116).